Consider the following 625-residue polypeptide: MNYDVIVVGGGHAGIEASLASARMGKKTLLITMLVEQIGAASCNPAIGGLAKGHLVRELDAIGGEMGLCTDNTGIQFRILNASKGAAVQGSRAQIDMDKYREYMRKVCHNTPNLEVYQDEVTALLVKNDNEVCGVKTKLTEEFIAKKVVLTTGTFMRGLVHIGENKYEAGRAWELPSTTLSTQLKELGLRVGRLKTGTPSRLDANSIDFSVMDMHGGDVNPAPFSFRTNKSDFAPTQFPCYITYTNEKTHEIISSNFYRAPLFTGQIEGLGPRYCPSIEDKVNRFAERDRHQLFLEPQTAMCTEYYINGMSSSLPIDVQKAMIHSVKGLENAKIIRYGYAIEYDYVDPTELKHTLETKKIKNLYHAGQINATTGYEEAAAQGLIAGINACLSIDEKEPFILRRDEAYIGVLIDDLVTKGTNEPYRMFTSRAEYRLLLREENADLRLSQYGHKFGLIDDETIKKVENKRKTIEEAIEFMANEWMTSKKETLELLESIGEEKINDRVLLVDLIGRNSIDIFKFEKLVPSFAHLDNYLKEQIIIEAKYYRYIQKQQKQIEKMKKMLKATIPESFSYKGLPGLSNEVVEKLEKHRPPTIFNASLISGVTPAALDIIHLNLNIFVTNTKK.

Residues 9-14 (GGGHAG), Val-121, and Ser-177 each bind FAD. 271–285 (GPRYCPSIEDKVNRF) is an NAD(+) binding site. An FAD-binding site is contributed by Gln-368.

Belongs to the MnmG family. As to quaternary structure, homodimer. Heterotetramer of two MnmE and two MnmG subunits. FAD serves as cofactor.

Its subcellular location is the cytoplasm. In terms of biological role, NAD-binding protein involved in the addition of a carboxymethylaminomethyl (cmnm) group at the wobble position (U34) of certain tRNAs, forming tRNA-cmnm(5)s(2)U34. The chain is tRNA uridine 5-carboxymethylaminomethyl modification enzyme MnmG from Aliarcobacter butzleri (strain RM4018) (Arcobacter butzleri).